Reading from the N-terminus, the 574-residue chain is MEEAKNMALLFFMDHLMQKNGRRTIHDLSCQFGARGFSEEMRNAVGTTQEGLTEFLQGHPSLFTVEGDQVILNGHNDLNAKNNPLLQSGIRSRNYEKEAVDFFVTKLTKFGPELQIKSLLGHRSQAAPEVRLVSGRHLKEFCEFLQSQVDYFVVEGDRVRLKNMPEPDENAIEMDDEGRPLAGVKAKQAAVEYLKSVLEQNEDQPIPLDQFYQNFCQRFSHTIRQDVATNPKELLQFLKLNRGLFFIRSNKVSLVKNRLNEDGSENGSDEGEETNNNGMFPLDQSALTRIHFVKALKPAQDLISRLWQDINNMEKKVVGLDLKTVTVGVDGEIFLSLGVIATTSQIGIFDLASSDVIILESGFKGILESEKVVKVIHDARRVASLLAHKYAVHMRNVFDTQVAHSLLQHEKFNKSLNEMRPISFINLQRVYYPQSIMLSDVTPRKMSMCPNWGVRPITEEFQLTIVEEAHCLLSALYQSLSNLIPVHLRGVFEDKCIEVNHPEVLLASPNRPPPQPFISSPYRASTRRDVRNGGSIMQSFSPAPYAAAPRPQMSDACTQTFSTGDIEVLNVFYE.

Positions 259-278 (LNEDGSENGSDEGEETNNNG) are disordered. The span at 262–273 (DGSENGSDEGEE) shows a compositional bias: acidic residues. The 3'-5' exonuclease domain occupies 312–414 (NMEKKVVGLD…SLLQHEKFNK (103 aa)).

In terms of assembly, component of a dynein-regulating complex composed of at least bicd-1, dlc-1 and egal-1.

The protein resides in the nucleus envelope. In terms of biological role, part of a complex with bicd-1 and dlc-1, which is recruited to the nuclear envelope by unc-83, where in turn, it recruits dynein to the nuclear surface and regulates nuclear migration in hypodermal precursor cells. The sequence is that of Egalitarian protein homolog from Caenorhabditis elegans.